The chain runs to 309 residues: Elongation factor Ts (309 aa).

The involved in Mg(2+) ion dislocation from EF-Tu stretch occupies residues 82–85; that stretch reads TDFV.

Belongs to the EF-Ts family.

The protein resides in the cytoplasm. Its function is as follows. Associates with the EF-Tu.GDP complex and induces the exchange of GDP to GTP. It remains bound to the aminoacyl-tRNA.EF-Tu.GTP complex up to the GTP hydrolysis stage on the ribosome. In Rickettsia prowazekii (strain Madrid E), this protein is Elongation factor Ts (tsf).